The primary structure comprises 64 residues: Putative isoleucine--tRNA ligase (64 aa).

The protein belongs to the class-I aminoacyl-tRNA synthetase family. In terms of assembly, member of a complex that includes annexin.

The catalysed reaction is tRNA(Ile) + L-isoleucine + ATP = L-isoleucyl-tRNA(Ile) + AMP + diphosphate. The sequence is that of Putative isoleucine--tRNA ligase from Physarum polycephalum (Slime mold).